The sequence spans 253 residues: Ribulose bisphosphate carboxylase large chain (253 aa).

Substrate is bound by residues N35 and T85. Catalysis depends on K87, which acts as the Proton acceptor. A substrate-binding site is contributed by K89. Mg(2+) is bound by residues K113, D115, and E116. The residue at position 113 (K113) is an N6-carboxylysine. Residue H206 is the Proton acceptor of the active site. Substrate-binding residues include R207 and H239.

The protein belongs to the RuBisCO large chain family. Type I subfamily. As to quaternary structure, heterohexadecamer of 8 large chains and 8 small chains; disulfide-linked. The disulfide link is formed within the large subunit homodimers. The cofactor is Mg(2+). Post-translationally, the disulfide bond which can form in the large chain dimeric partners within the hexadecamer appears to be associated with oxidative stress and protein turnover.

Its subcellular location is the plastid. The protein localises to the chloroplast. The catalysed reaction is 2 (2R)-3-phosphoglycerate + 2 H(+) = D-ribulose 1,5-bisphosphate + CO2 + H2O. It carries out the reaction D-ribulose 1,5-bisphosphate + O2 = 2-phosphoglycolate + (2R)-3-phosphoglycerate + 2 H(+). In terms of biological role, ruBisCO catalyzes two reactions: the carboxylation of D-ribulose 1,5-bisphosphate, the primary event in carbon dioxide fixation, as well as the oxidative fragmentation of the pentose substrate in the photorespiration process. Both reactions occur simultaneously and in competition at the same active site. The protein is Ribulose bisphosphate carboxylase large chain (rbcL) of Magnolia latahensis (Apocynophyllum latahense).